The following is a 185-amino-acid chain: Ribosomal RNA small subunit methyltransferase G (185 aa).

S-adenosyl-L-methionine contacts are provided by residues glycine 59, phenylalanine 64, isoleucine 110–glutamine 111, and arginine 127.

The protein belongs to the methyltransferase superfamily. RNA methyltransferase RsmG family.

It is found in the cytoplasm. The catalysed reaction is guanosine(527) in 16S rRNA + S-adenosyl-L-methionine = N(7)-methylguanosine(527) in 16S rRNA + S-adenosyl-L-homocysteine. Specifically methylates the N7 position of guanine in position 527 of 16S rRNA. The chain is Ribosomal RNA small subunit methyltransferase G from Helicobacter hepaticus (strain ATCC 51449 / 3B1).